Here is a 295-residue protein sequence, read N- to C-terminus: Lipoyl synthase (295 aa).

[4Fe-4S] cluster-binding residues include Cys34, Cys39, Cys45, Cys60, Cys64, Cys67, and Ser273. A Radical SAM core domain is found at 46–262; the sequence is WNKRHATIMI…KLMAYAKGFS (217 aa).

The protein belongs to the radical SAM superfamily. Lipoyl synthase family. [4Fe-4S] cluster serves as cofactor.

It localises to the cytoplasm. The enzyme catalyses [[Fe-S] cluster scaffold protein carrying a second [4Fe-4S](2+) cluster] + N(6)-octanoyl-L-lysyl-[protein] + 2 oxidized [2Fe-2S]-[ferredoxin] + 2 S-adenosyl-L-methionine + 4 H(+) = [[Fe-S] cluster scaffold protein] + N(6)-[(R)-dihydrolipoyl]-L-lysyl-[protein] + 4 Fe(3+) + 2 hydrogen sulfide + 2 5'-deoxyadenosine + 2 L-methionine + 2 reduced [2Fe-2S]-[ferredoxin]. Its pathway is protein modification; protein lipoylation via endogenous pathway; protein N(6)-(lipoyl)lysine from octanoyl-[acyl-carrier-protein]: step 2/2. In terms of biological role, catalyzes the radical-mediated insertion of two sulfur atoms into the C-6 and C-8 positions of the octanoyl moiety bound to the lipoyl domains of lipoate-dependent enzymes, thereby converting the octanoylated domains into lipoylated derivatives. This chain is Lipoyl synthase, found in Anaplasma marginale (strain St. Maries).